We begin with the raw amino-acid sequence, 286 residues long: Glycine--tRNA ligase alpha subunit (286 aa).

It belongs to the class-II aminoacyl-tRNA synthetase family. Tetramer of two alpha and two beta subunits.

The protein resides in the cytoplasm. The enzyme catalyses tRNA(Gly) + glycine + ATP = glycyl-tRNA(Gly) + AMP + diphosphate. This Campylobacter concisus (strain 13826) protein is Glycine--tRNA ligase alpha subunit.